We begin with the raw amino-acid sequence, 458 residues long: UDP-N-acetylmuramate--L-alanine ligase (458 aa).

Position 118–124 (118–124 (GTHGKTT)) interacts with ATP.

It belongs to the MurCDEF family.

It localises to the cytoplasm. It carries out the reaction UDP-N-acetyl-alpha-D-muramate + L-alanine + ATP = UDP-N-acetyl-alpha-D-muramoyl-L-alanine + ADP + phosphate + H(+). Its pathway is cell wall biogenesis; peptidoglycan biosynthesis. Functionally, cell wall formation. The sequence is that of UDP-N-acetylmuramate--L-alanine ligase from Clostridium botulinum (strain ATCC 19397 / Type A).